The following is a 416-amino-acid chain: MTNLEVMGKAARQAAFELSQLSAGDKNYALQMIAEQLESQQQQILAANARDIDEARINGLNDAIIDRLLLTPERLRGIANDVRHVISLADPVGKLIDGGILDSGLKLERIRVPVGVIGTIYEARPNVTIDVASLCLKTGNAVILRGGKETRHSNRILVEVVQNALEKAGLPKTAVQAITDPDRALVMELLKLDRYVDMIIPRGGAGLHALCKQHATIPVIIGGIGVCHTFVEQSADQNRAISVIKNAKTQRPSTCNTLETLLIQESIAHEFLPKLAAELPVKYYADKTAYSILHHAGAEVLAVTEDDLRKEWLCTNLNVVIVQDIEAAVAHIREYGSQHSEAILTESLQLARRFVAQVDSAAVYVNASTRFTDGGQFGLGAEVAVSTQKLHARGPMGLEALTTYKWVATGDYTVRS.

This sequence belongs to the gamma-glutamyl phosphate reductase family.

Its subcellular location is the cytoplasm. The catalysed reaction is L-glutamate 5-semialdehyde + phosphate + NADP(+) = L-glutamyl 5-phosphate + NADPH + H(+). It participates in amino-acid biosynthesis; L-proline biosynthesis; L-glutamate 5-semialdehyde from L-glutamate: step 2/2. Catalyzes the NADPH-dependent reduction of L-glutamate 5-phosphate into L-glutamate 5-semialdehyde and phosphate. The product spontaneously undergoes cyclization to form 1-pyrroline-5-carboxylate. The chain is Gamma-glutamyl phosphate reductase from Actinobacillus succinogenes (strain ATCC 55618 / DSM 22257 / CCUG 43843 / 130Z).